The primary structure comprises 191 residues: ADP-ribosylation factor (191 aa).

A lipid anchor (N-myristoyl glycine) is attached at glycine 2. GTP is bound by residues 24–31 (GLDAAGKT), 67–71 (DVGGQ), and 128–131 (NKQD).

It belongs to the small GTPase superfamily. Arf family.

The protein localises to the golgi apparatus. Functionally, GTP-binding protein involved in protein trafficking; may modulate vesicle budding and uncoating within the Golgi apparatus. The protein is ADP-ribosylation factor of Giardia intestinalis (Giardia lamblia).